Here is a 692-residue protein sequence, read N- to C-terminus: Ribonuclease J (692 aa).

A disordered region spans residues 1–91 (MTDNNQNNEN…RNYAKEELDN (91 aa)). Over residues 9–25 (ENHENSSENSKDHHEAR) the composition is skewed to basic and acidic residues. Positions 57–79 (HHKKEHRPNKKPNNHHKPKHASQ) are enriched in basic residues. N6-acetyllysine is present on residues lysine 135 and lysine 141. Zn(2+) is bound by residues histidine 209, histidine 211, aspartate 213, histidine 214, histidine 278, and aspartate 300. Lysine 324, lysine 338, and lysine 398 each carry N6-acetyllysine. Position 501-505 (501-505 (HVSGH)) interacts with substrate. N6-acetyllysine is present on lysine 512. Histidine 527 is a binding site for Zn(2+). Residues lysine 548, lysine 635, and lysine 650 each carry the N6-acetyllysine modification.

It belongs to the metallo-beta-lactamase superfamily. RNA-metabolizing metallo-beta-lactamase-like family. Bacterial RNase J subfamily. As to quaternary structure, homodimer. Homotetramer; dimer of homodimers. Interacts with RNA helicase RhpA, might be a member of a minimal RNA degradosome complex. Zn(2+) is required as a cofactor. Acetylated on nine lysine residues. Some of the residues are acetylated by multiple different mechanisms. RimL is partially responsible for the acetylation of Lys-324, Lys-398 and Lys-650. HPB8_1270 homolog is partially responsible for the acetylation of Lys-324, Lys-398, Lys-512 and Lys-650. Acetyl-phosphate-mediated non-enzymatic acetylation pathway takes part in the acetylation of Lys-135, Lys-324, Lys-398, Lys-512 and Lys-650. Acetylation of the remaining residues Lys-141, Lys-338, Lys-548 and Lys-635 occurs by a yet undetermined mechanism. Acetylation on a number of these residues is important for growth regulation and proper cell morphology.

The protein resides in the cytoplasm. Catalytic activity is regulated by the balance between homodimers and homotetramers, with homotetramers being the active forms of this enzyme. Acetylation allosterically regulates the homooligomerization state and hence the catalytic activity. In terms of biological role, an RNase that has 5'-3' exoribonuclease and endoribonuclease activity. Degrades 5'-monophosphorylated ssRNA and dsRNA, considerably more active on ssRNA. Association with RhpA significantly increases the dsRNase activity. Degrades RNA substrate with hairpin structures at both ends with low activity, but presence of RhpA significantly increases the activity on this substrate. Stimulates ATPase activity of RNA helicase RhpA. Involved in stabilization of mRNA but apparently not rRNA. This chain is Ribonuclease J, found in Helicobacter pylori (strain J99 / ATCC 700824) (Campylobacter pylori J99).